The following is a 222-amino-acid chain: Vacuolar protein sorting-associated protein 2 homolog 2 (222 aa).

Coiled coils occupy residues 26–83 (RGIE…AQIR) and 143–222 (SEAI…LRRI). The disordered stretch occupies residues 179–222 (SSAPKGRIATKTAAPPASTAATNKNSESSEVDELEKRLASLRRI). The segment covering 187–203 (ATKTAAPPASTAATNKN) has biased composition (low complexity).

The protein belongs to the SNF7 family. Component of the endosomal sorting required for transport complex III (ESCRT-III), composed at least of VPS2, VPS20, VPS24 and VPS32. Interacts with CHMP1A, CHMP1B and VPS60-1.

It is found in the endosome. Functionally, component of the ESCRT-III complex, which is required for multivesicular bodies (MVBs) formation and sorting of endosomal cargo proteins into MVBs. The ESCRT-III complex is probably involved in the concentration of MVB cargo. This Arabidopsis thaliana (Mouse-ear cress) protein is Vacuolar protein sorting-associated protein 2 homolog 2 (VPS2.2).